Reading from the N-terminus, the 242-residue chain is Triosephosphate isomerase (242 aa).

9–11 (NWK) is a binding site for substrate. The active-site Electrophile is the histidine 99. Catalysis depends on glutamate 169, which acts as the Proton acceptor. Residues glycine 175, serine 207, and 228-229 (GG) each bind substrate.

Belongs to the triosephosphate isomerase family. As to quaternary structure, homodimer.

It localises to the cytoplasm. It carries out the reaction D-glyceraldehyde 3-phosphate = dihydroxyacetone phosphate. The protein operates within carbohydrate biosynthesis; gluconeogenesis. It participates in carbohydrate degradation; glycolysis; D-glyceraldehyde 3-phosphate from glycerone phosphate: step 1/1. Involved in the gluconeogenesis. Catalyzes stereospecifically the conversion of dihydroxyacetone phosphate (DHAP) to D-glyceraldehyde-3-phosphate (G3P). The chain is Triosephosphate isomerase from Mycoplasma mobile (strain ATCC 43663 / 163K / NCTC 11711) (Mesomycoplasma mobile).